The primary structure comprises 105 residues: Nucleoid-associated protein OCAR_7544/OCA5_c05960 (105 aa).

This sequence belongs to the YbaB/EbfC family. As to quaternary structure, homodimer.

It localises to the cytoplasm. It is found in the nucleoid. In terms of biological role, binds to DNA and alters its conformation. May be involved in regulation of gene expression, nucleoid organization and DNA protection. This Afipia carboxidovorans (strain ATCC 49405 / DSM 1227 / KCTC 32145 / OM5) (Oligotropha carboxidovorans) protein is Nucleoid-associated protein OCAR_7544/OCA5_c05960.